A 296-amino-acid chain; its full sequence is Small ribosomal subunit protein uS2 (296 aa).

2 disordered regions span residues 1 to 24 and 270 to 296; these read MNTKKEEVVSSPEATVEKKQTQSQ and HELKKSEEASEVKAASTKEKLTEEASQ.

Belongs to the universal ribosomal protein uS2 family.

The protein is Small ribosomal subunit protein uS2 of Mycoplasmopsis synoviae (strain 53) (Mycoplasma synoviae).